Consider the following 279-residue polypeptide: Phosphatidylglycerol--prolipoprotein diacylglyceryl transferase (279 aa).

The next 7 membrane-spanning stretches (helical) occupy residues 25-45, 60-80, 103-123, 133-153, 181-201, 209-229, and 236-256; these read WYGL…KFFV, YFIW…ILIY, FVGI…IATI, LWSL…FGRI, PSQL…LYFY, GELI…TEFL, and IGYF…MLIL. An a 1,2-diacyl-sn-glycero-3-phospho-(1'-sn-glycerol)-binding site is contributed by Arg-152.

It belongs to the Lgt family.

The protein localises to the cell inner membrane. The catalysed reaction is L-cysteinyl-[prolipoprotein] + a 1,2-diacyl-sn-glycero-3-phospho-(1'-sn-glycerol) = an S-1,2-diacyl-sn-glyceryl-L-cysteinyl-[prolipoprotein] + sn-glycerol 1-phosphate + H(+). It participates in protein modification; lipoprotein biosynthesis (diacylglyceryl transfer). In terms of biological role, catalyzes the transfer of the diacylglyceryl group from phosphatidylglycerol to the sulfhydryl group of the N-terminal cysteine of a prolipoprotein, the first step in the formation of mature lipoproteins. The polypeptide is Phosphatidylglycerol--prolipoprotein diacylglyceryl transferase (Campylobacter hominis (strain ATCC BAA-381 / DSM 21671 / CCUG 45161 / LMG 19568 / NCTC 13146 / CH001A)).